A 532-amino-acid chain; its full sequence is NADH-quinone oxidoreductase subunit N 2 (532 aa).

Helical transmembrane passes span 37-57, 63-83, 107-127, 133-153, 158-178, 192-212, 241-261, 276-296, 302-322, 336-356, 367-387, 411-431, 444-464, and 504-524; these read VAPP…DLFL, RLLG…LIPL, FTLV…LLSL, LPAG…ALLP, LATL…LVGI, FFLS…FVYA, VALT…HFWV, LSVV…VVAF, VWGP…NVAA, LLAW…AAAA, VAYA…AAVV, LALG…IGLF, GLGW…YYYL, and TAIV…QTVL.

Belongs to the complex I subunit 2 family. NDH-1 is composed of 14 different subunits. Subunits NuoA, H, J, K, L, M, N constitute the membrane sector of the complex.

It is found in the cell membrane. The catalysed reaction is a quinone + NADH + 5 H(+)(in) = a quinol + NAD(+) + 4 H(+)(out). In terms of biological role, NDH-1 shuttles electrons from NADH, via FMN and iron-sulfur (Fe-S) centers, to quinones in the respiratory chain. The immediate electron acceptor for the enzyme in this species is believed to be a menaquinone. Couples the redox reaction to proton translocation (for every two electrons transferred, four hydrogen ions are translocated across the cytoplasmic membrane), and thus conserves the redox energy in a proton gradient. The sequence is that of NADH-quinone oxidoreductase subunit N 2 from Streptomyces griseus subsp. griseus (strain JCM 4626 / CBS 651.72 / NBRC 13350 / KCC S-0626 / ISP 5235).